Here is a 200-residue protein sequence, read N- to C-terminus: UPF0316 protein SACOL1973 (200 aa).

3 consecutive transmembrane segments (helical) span residues 8–28 (PWLM…FLTM), 40–60 (IAAS…GLVM), and 66–86 (IQNI…GMKI).

This sequence belongs to the UPF0316 family.

It localises to the cell membrane. This Staphylococcus aureus (strain COL) protein is UPF0316 protein SACOL1973.